Here is a 105-residue protein sequence, read N- to C-terminus: uncharacterized protein (105 aa).

Residues 64 to 84 (ILLISIFFLLLFALPQHTMGI) traverse the membrane as a helical segment.

It is found in the membrane. This is an uncharacterized protein from Saccharomyces cerevisiae (strain ATCC 204508 / S288c) (Baker's yeast).